The primary structure comprises 223 residues: Ribonuclease T (223 aa).

The 175-residue stretch at 20–194 (VVIDVETAGF…YDTEQTALLF (175 aa)) folds into the Exonuclease domain. Residues Asp-23, Glu-25, His-181, and Asp-186 each contribute to the Mg(2+) site. The active-site Proton donor/acceptor is the His-181.

Belongs to the RNase T family. As to quaternary structure, homodimer. The cofactor is Mg(2+).

Its function is as follows. Trims short 3' overhangs of a variety of RNA species, leaving a one or two nucleotide 3' overhang. Responsible for the end-turnover of tRNA: specifically removes the terminal AMP residue from uncharged tRNA (tRNA-C-C-A). Also appears to be involved in tRNA biosynthesis. The chain is Ribonuclease T from Cronobacter sakazakii (strain ATCC BAA-894) (Enterobacter sakazakii).